The primary structure comprises 301 residues: MFFRNLTLFRFPTTLDFSQIDTLLPPVQLKPVGPLEMSSRGFISPFGRDEQGVLSHRLEDFLWLTVGGEDKILPGAVVNDLLERKVAEIEEKEGRRPSGKARKRLKDDLIHELLPRAFVKSSRTDAILDLQHGYIAVNSSSRKSGENVMSEIRGALGSFPALPLNAEVAPRAILTGWIAGEPLPEGLSLGEECEMKDPIEGGAVVKCQHQELRGDEIDKHLEAGKQVTKLALVLDDNLSFVLGDDLVIRKLKFLDGALDQLEHSEDDGARAELDARFTLMSAEIRRLFLLLETALKLSKAE.

This sequence belongs to the RdgC family.

The protein localises to the cytoplasm. The protein resides in the nucleoid. Its function is as follows. May be involved in recombination. In Xanthomonas oryzae pv. oryzae (strain KACC10331 / KXO85), this protein is Recombination-associated protein RdgC.